The following is a 1625-amino-acid chain: Nonribosomal peptide synthetase aclP (1625 aa).

The Carrier 1 domain occupies Thr47–Glu123. Ser84 is modified (O-(pantetheine 4'-phosphoryl)serine). Residues Ile127–Ser157 are disordered. The segment at Ala286–Leu567 is condensation 1. The adenylation stretch occupies residues Phe614–Arg997. Positions Ser1096 to Leu1171 constitute a Carrier 2 domain. Ser1131 is subject to O-(pantetheine 4'-phosphoryl)serine. Residues Glu1195–Ser1585 form a condensation 2 region.

This sequence belongs to the NRP synthetase family.

Its pathway is mycotoxin biosynthesis. Its function is as follows. Nonribosomal peptide synthetase; part of the gene cluster that mediates the biosynthesis of aspirochlorine (or antibiotic A30641), an unusual halogenated spiro compound with distinctive antifungal properties due to selective inhibition of protein biosynthesis, and which is also active against bacteria, viruses, and murine tumor cells. The non-ribosomal peptide synthetase (NRPS) aclP is responsible the formation of the diketopiperazine (DKP) core from the condensation of 2 phenylalanine residues. One Phe residue is tailored into chlorotyrosine by hydroxylation and chlorination, whereas the second Phe undergoes an unprecedented C-C bond cleavage to be converted into glycine. After formation of the DKP, sulfur is incorporated into the DKP by conjugation with glutathione by aclG, followed by its stepwise degradation to the thiol by aclI, aclJ and aclK, and the dithiol oxidation by aclT. In addition, oxygenases (aclB, aclC, aclL and aclO) and O-methyltransferases (aclM and aclU) act as tailoring enzymes to produce the intermediate dechloroaspirochlorine. Ultimately, chlorination of dechloroaspirochlorine by the halogenase aclH is the last step in the aspirochlorine pathway. This chain is Nonribosomal peptide synthetase aclP, found in Aspergillus oryzae (strain ATCC 42149 / RIB 40) (Yellow koji mold).